The following is a 365-amino-acid chain: Probable dual-specificity RNA methyltransferase RlmN (365 aa).

Residue Glu-108 is the Proton acceptor of the active site. The Radical SAM core domain occupies 114-347 (HNYGNSVCVT…VTIRREHGHD (234 aa)). An intrachain disulfide couples Cys-121 to Cys-352. Residues Cys-128, Cys-132, and Cys-135 each coordinate [4Fe-4S] cluster. S-adenosyl-L-methionine-binding positions include 178–179 (GE), Ser-210, 233–235 (SLH), and Asn-309. Cys-352 serves as the catalytic S-methylcysteine intermediate.

The protein belongs to the radical SAM superfamily. RlmN family. [4Fe-4S] cluster serves as cofactor.

Its subcellular location is the cytoplasm. The enzyme catalyses adenosine(2503) in 23S rRNA + 2 reduced [2Fe-2S]-[ferredoxin] + 2 S-adenosyl-L-methionine = 2-methyladenosine(2503) in 23S rRNA + 5'-deoxyadenosine + L-methionine + 2 oxidized [2Fe-2S]-[ferredoxin] + S-adenosyl-L-homocysteine. It carries out the reaction adenosine(37) in tRNA + 2 reduced [2Fe-2S]-[ferredoxin] + 2 S-adenosyl-L-methionine = 2-methyladenosine(37) in tRNA + 5'-deoxyadenosine + L-methionine + 2 oxidized [2Fe-2S]-[ferredoxin] + S-adenosyl-L-homocysteine. Functionally, specifically methylates position 2 of adenine 2503 in 23S rRNA and position 2 of adenine 37 in tRNAs. In Geobacillus kaustophilus (strain HTA426), this protein is Probable dual-specificity RNA methyltransferase RlmN.